The chain runs to 316 residues: Homoserine O-succinyltransferase (316 aa).

C142 acts as the Acyl-thioester intermediate in catalysis. Residues K163 and S192 each coordinate substrate. Catalysis depends on H235, which acts as the Proton acceptor. E237 is a catalytic residue. R249 contacts substrate.

It belongs to the MetA family.

The protein resides in the cytoplasm. It carries out the reaction L-homoserine + succinyl-CoA = O-succinyl-L-homoserine + CoA. It functions in the pathway amino-acid biosynthesis; L-methionine biosynthesis via de novo pathway; O-succinyl-L-homoserine from L-homoserine: step 1/1. In terms of biological role, transfers a succinyl group from succinyl-CoA to L-homoserine, forming succinyl-L-homoserine. The polypeptide is Homoserine O-succinyltransferase (Shewanella amazonensis (strain ATCC BAA-1098 / SB2B)).